The chain runs to 288 residues: Bifunctional protein FolD 2 (288 aa).

Residues G166–S168 and S191 each bind NADP(+).

This sequence belongs to the tetrahydrofolate dehydrogenase/cyclohydrolase family. In terms of assembly, homodimer.

It catalyses the reaction (6R)-5,10-methylene-5,6,7,8-tetrahydrofolate + NADP(+) = (6R)-5,10-methenyltetrahydrofolate + NADPH. The catalysed reaction is (6R)-5,10-methenyltetrahydrofolate + H2O = (6R)-10-formyltetrahydrofolate + H(+). Its pathway is one-carbon metabolism; tetrahydrofolate interconversion. Catalyzes the oxidation of 5,10-methylenetetrahydrofolate to 5,10-methenyltetrahydrofolate and then the hydrolysis of 5,10-methenyltetrahydrofolate to 10-formyltetrahydrofolate. The sequence is that of Bifunctional protein FolD 2 from Frankia casuarinae (strain DSM 45818 / CECT 9043 / HFP020203 / CcI3).